The primary structure comprises 751 residues: Polyadenylate-binding protein, cytoplasmic and nuclear (751 aa).

Polar residues-rich tracts occupy residues 1-26 (MSAEVSTTPAADNTVNGTPEATNPAA) and 36-50 (ESASPSATPSANQPH). The disordered stretch occupies residues 1–50 (MSAEVSTTPAADNTVNGTPEATNPAATSAPEVTAVESASPSATPSANQPH). 4 consecutive RRM domains span residues 52 to 130 (ASLY…WSQR), 140 to 217 (GNVF…HHIS), 233 to 310 (TNVY…RAQK), and 336 to 458 (VNLY…LAQR). 2 disordered regions span residues 371–413 (TVTA…KKTE) and 601–643 (GQGM…REEV). The span at 379–413 (ESEKEKESNKENEKEGEEKTEEKPKESEEEAKKTE) shows a compositional bias: basic and acidic residues. Residues 603–629 (GMRGPGYGQGRGGAPVQGGPRPQGGRG) are compositionally biased toward gly residues. One can recognise a PABC domain in the interval 646-723 (TGGLTAQTLN…ALSVYDEYMK (78 aa)). The tract at residues 725 to 751 (KGEGEAPAEPAKPKEDAAETATEENKS) is disordered. The segment covering 735–751 (AKPKEDAAETATEENKS) has biased composition (basic and acidic residues).

This sequence belongs to the polyadenylate-binding protein type-1 family.

Its subcellular location is the cytoplasm. The protein resides in the nucleus. Binds the poly(A) tail of mRNA. Appears to be an important mediator of the multiple roles of the poly(A) tail in mRNA biogenesis, stability and translation. In the nucleus, involved in both mRNA cleavage and polyadenylation. Is also required for efficient mRNA export to the cytoplasm. Acts in concert with a poly(A)-specific nuclease (PAN) to affect poly(A) tail shortening, which may occur concomitantly with either nucleocytoplasmic mRNA transport or translational initiation. In the cytoplasm, stimulates translation initiation and regulates mRNA decay through translation termination-coupled poly(A) shortening, probably mediated by PAN. In Neosartorya fischeri (strain ATCC 1020 / DSM 3700 / CBS 544.65 / FGSC A1164 / JCM 1740 / NRRL 181 / WB 181) (Aspergillus fischerianus), this protein is Polyadenylate-binding protein, cytoplasmic and nuclear (pab1).